Here is a 155-residue protein sequence, read N- to C-terminus: Small ribosomal subunit protein uS7 (155 aa).

It belongs to the universal ribosomal protein uS7 family. As to quaternary structure, part of the 30S ribosomal subunit. Contacts proteins S9 and S11.

In terms of biological role, one of the primary rRNA binding proteins, it binds directly to 16S rRNA where it nucleates assembly of the head domain of the 30S subunit. Is located at the subunit interface close to the decoding center, probably blocks exit of the E-site tRNA. The sequence is that of Small ribosomal subunit protein uS7 from Pelodictyon phaeoclathratiforme (strain DSM 5477 / BU-1).